Here is a 490-residue protein sequence, read N- to C-terminus: Cytochrome P450 71B29 (490 aa).

The helical transmembrane segment at 1–21 (MAIILCFLILLPLILIFLKKL) threads the bilayer. Cys-440 serves as a coordination point for heme.

The protein belongs to the cytochrome P450 family. Heme is required as a cofactor.

It localises to the membrane. The polypeptide is Cytochrome P450 71B29 (CYP71B29) (Arabidopsis thaliana (Mouse-ear cress)).